The primary structure comprises 489 residues: N-succinylglutamate 5-semialdehyde dehydrogenase (489 aa).

Glycine 223–glycine 228 serves as a coordination point for NAD(+). Residues glutamate 246 and cysteine 280 contribute to the active site.

This sequence belongs to the aldehyde dehydrogenase family. AstD subfamily.

It catalyses the reaction N-succinyl-L-glutamate 5-semialdehyde + NAD(+) + H2O = N-succinyl-L-glutamate + NADH + 2 H(+). The protein operates within amino-acid degradation; L-arginine degradation via AST pathway; L-glutamate and succinate from L-arginine: step 4/5. Its function is as follows. Catalyzes the NAD-dependent reduction of succinylglutamate semialdehyde into succinylglutamate. In Acinetobacter baylyi (strain ATCC 33305 / BD413 / ADP1), this protein is N-succinylglutamate 5-semialdehyde dehydrogenase.